We begin with the raw amino-acid sequence, 958 residues long: Glycine dehydrogenase (decarboxylating) (958 aa).

Position 707 is an N6-(pyridoxal phosphate)lysine (lysine 707).

It belongs to the GcvP family. The glycine cleavage system is composed of four proteins: P, T, L and H. Pyridoxal 5'-phosphate is required as a cofactor.

The catalysed reaction is N(6)-[(R)-lipoyl]-L-lysyl-[glycine-cleavage complex H protein] + glycine + H(+) = N(6)-[(R)-S(8)-aminomethyldihydrolipoyl]-L-lysyl-[glycine-cleavage complex H protein] + CO2. The glycine cleavage system catalyzes the degradation of glycine. The P protein binds the alpha-amino group of glycine through its pyridoxal phosphate cofactor; CO(2) is released and the remaining methylamine moiety is then transferred to the lipoamide cofactor of the H protein. The protein is Glycine dehydrogenase (decarboxylating) of Stutzerimonas stutzeri (strain A1501) (Pseudomonas stutzeri).